The following is a 345-amino-acid chain: Ferritin-like-encapsulin shell fusion protein (345 aa).

Residues 1-109 are ferritin-like domain; sequence MLSINPTLIN…INDNKKEESN (109 aa). Positions 31, 61, and 64 each coordinate Fe cation. Residues 110-345 form an encapsulin domain region; sequence VEYFEKLRSA…KNPEAIVVLE (236 aa).

The protein in the N-terminal section; belongs to the ferritin-like superfamily. This sequence in the C-terminal section; belongs to the encapsulin family. Family 1 subfamily. In terms of assembly, 180 monomers assemble into 12 pentamers and 20 hexamers which further assemble into an icosahedral particle about 36.6 nm in diameter. The N-terminal domain (residues 1-99) crystallizes as 3 decamers.

The protein resides in the encapsulin nanocompartment. The enzyme catalyses 4 Fe(2+) + O2 + 4 H(+) = 4 Fe(3+) + 2 H2O. Its activity is regulated as follows. The ferroxidase activity is inhibited by zinc. Fusion of the shell and cargo protein of a type 1 encapsulin nanocompartment. The nanocompartment is probably involved in iron storage. Expression in E.coli generates spherical particles (PfSPs) about 30 nm in diameter. The purified N-terminus has ferroxidase activity. This chain is Ferritin-like-encapsulin shell fusion protein, found in Pyrococcus furiosus (strain ATCC 43587 / DSM 3638 / JCM 8422 / Vc1).